Reading from the N-terminus, the 249-residue chain is DNA repair protein RecO (249 aa).

It belongs to the RecO family.

In terms of biological role, involved in DNA repair and RecF pathway recombination. The sequence is that of DNA repair protein RecO from Mycoplasma capricolum subsp. capricolum (strain California kid / ATCC 27343 / NCTC 10154).